Consider the following 209-residue polypeptide: Large ribosomal subunit protein uL3 (209 aa).

An N5-methylglutamine modification is found at glutamine 150.

This sequence belongs to the universal ribosomal protein uL3 family. As to quaternary structure, part of the 50S ribosomal subunit. Forms a cluster with proteins L14 and L19. Post-translationally, methylated by PrmB.

One of the primary rRNA binding proteins, it binds directly near the 3'-end of the 23S rRNA, where it nucleates assembly of the 50S subunit. The chain is Large ribosomal subunit protein uL3 from Escherichia coli O139:H28 (strain E24377A / ETEC).